Consider the following 333-residue polypeptide: D-alanine--D-alanine ligase (333 aa).

In terms of domain architecture, ATP-grasp spans 124 to 329; it reads KMWFSALGIR…FAQYLSGNIM (206 aa). 154–209 contacts ATP; it reads ALEKWGSIFIKAASQGSSVGCYRVDNKEQLANSLEEAFKYSPYVVVEKTINARELE. Positions 283, 296, and 298 each coordinate Mg(2+).

This sequence belongs to the D-alanine--D-alanine ligase family. The cofactor is Mg(2+). It depends on Mn(2+) as a cofactor.

Its subcellular location is the cytoplasm. It catalyses the reaction 2 D-alanine + ATP = D-alanyl-D-alanine + ADP + phosphate + H(+). The protein operates within cell wall biogenesis; peptidoglycan biosynthesis. Functionally, cell wall formation. The sequence is that of D-alanine--D-alanine ligase from Shewanella halifaxensis (strain HAW-EB4).